Consider the following 272-residue polypeptide: MRILLTNDDGIHAPGIHALWRIFDDWADIFVVAPDTERSATGHGITVHQPLRVEKLSFANPHCHGWAVNGTPADCVKLAMEELLAEPPHIVISGINRGPNLGTDVLYSGTVSAAMEGVIYGVPSIAVSVTGWHTADYTVAAETTRLLCEKLVARGLTPDTFLNVNVPDLPRERIAGIQVTKLGSRRYQNIFDKRTDPRGRTYYWMAGEVHDVDAGEGTDISAVNAGAISVTPIHFDLTNYSLIQEVSDWLGGGSSPFADRNKKDDVETKRKA.

Positions 8, 9, 39, and 96 each coordinate a divalent metal cation.

It belongs to the SurE nucleotidase family. A divalent metal cation serves as cofactor.

Its subcellular location is the cytoplasm. The catalysed reaction is a ribonucleoside 5'-phosphate + H2O = a ribonucleoside + phosphate. In terms of biological role, nucleotidase that shows phosphatase activity on nucleoside 5'-monophosphates. This is 5'-nucleotidase SurE from Heliobacterium modesticaldum (strain ATCC 51547 / Ice1).